We begin with the raw amino-acid sequence, 128 residues long: Small ribosomal subunit protein bS6 (128 aa).

Belongs to the bacterial ribosomal protein bS6 family.

In terms of biological role, binds together with bS18 to 16S ribosomal RNA. In Leifsonia xyli subsp. xyli (strain CTCB07), this protein is Small ribosomal subunit protein bS6.